Here is a 331-residue protein sequence, read N- to C-terminus: Olfactory receptor 7D11 (331 aa).

Residues 1 to 25 (MEIENHTLITKFLILGLSDDPELQP) lie on the Extracellular side of the membrane. The N-linked (GlcNAc...) asparagine glycan is linked to N5. A helical transmembrane segment spans residues 26 to 46 (ILFGLFLSMYLVTLLGNLLII). Residues 47 to 57 (LAVSSDSHLHK) lie on the Cytoplasmic side of the membrane. A helical transmembrane segment spans residues 58–78 (PMYFLLSNLSFIDICFISTTI). The Extracellular segment spans residues 79 to 97 (PKMLVNMQSQIKDISYIEC). A disulfide bridge links C97 with C179. A helical transmembrane segment spans residues 98–118 (LTQVFFFNIFAGMDNFLLTLM). At 119 to 142 (AYDRFVAICHPLNYTVIMNPRLCA) the chain is on the cytoplasmic side. A helical transmembrane segment spans residues 143–163 (LLILMFWIIMFWVSLIHVLLM). Over 164 to 196 (NELNFSRGTEIPHFFCELAQVLKVSNSDNHVNN) the chain is Extracellular. The N-linked (GlcNAc...) asparagine glycan is linked to N167. Residues 197–217 (VFMYVVTSLLGVIPMTGILMS) traverse the membrane as a helical segment. At 218–244 (YSQIFSSLFRMSSTVSKYKAFSTCGSH) the chain is on the cytoplasmic side. Residues 245-265 (LCVVTLFYGSGFGVYFSSSVV) form a helical membrane-spanning segment. The Extracellular portion of the chain corresponds to 266–271 (HSTQRR). The helical transmembrane segment at 272 to 292 (KVASLMYTVISPMLNPFIYTL) threads the bilayer. The Cytoplasmic portion of the chain corresponds to 293-331 (RNKDVKGALGKLFNRVASSPSCINDIRNKLLLRSVRQIL).

Belongs to the G-protein coupled receptor 1 family.

Its subcellular location is the cell membrane. Possible olfactory or taste receptor. This is Olfactory receptor 7D11 from Mus musculus (Mouse).